A 435-amino-acid chain; its full sequence is MTQTVNVIGAGLAGSEAAYQLAERGIKVNLIEMRPVKQTPAHHTDKFAELVCSNSLRGNALTNGVGVLKEEMRRLNSIIIEAADKARVPAGGALAVDRHDFSGYITETLKNHENITVINEEINAIPDGYTIIATGPLTTETLAQEIVDITGKDQLYFYDAAAPIIEKESIDMDKVYLKSRYDKGEAAYLNCPMTEDEFNRFYDAVLEAEVAPVNSFEKEKYFEGCMPFEVMAERGRKTLLFGPMKPVGLEDPKTGKRPYAVVQLRQDDAAGTLYNIVGFQTHLKWGAQKEVIKLIPGLENVDIVRYGVMHRNTFINSPDVLNEKYELISQPNIQFAGQMTGVEGYVESAASGLVAGINLAHKILGKGEVVFPRETMIGSMAYYISHAKNNKNFQPMNANFGLLPSLETRIKDKKERYEAQANRALDYLENFKKTL.

9–14 (GAGLAG) contacts FAD.

Belongs to the MnmG family. TrmFO subfamily. FAD is required as a cofactor.

The protein localises to the cytoplasm. The enzyme catalyses uridine(54) in tRNA + (6R)-5,10-methylene-5,6,7,8-tetrahydrofolate + NADH + H(+) = 5-methyluridine(54) in tRNA + (6S)-5,6,7,8-tetrahydrofolate + NAD(+). It catalyses the reaction uridine(54) in tRNA + (6R)-5,10-methylene-5,6,7,8-tetrahydrofolate + NADPH + H(+) = 5-methyluridine(54) in tRNA + (6S)-5,6,7,8-tetrahydrofolate + NADP(+). Catalyzes the folate-dependent formation of 5-methyl-uridine at position 54 (M-5-U54) in all tRNAs. The protein is Methylenetetrahydrofolate--tRNA-(uracil-5-)-methyltransferase TrmFO of Staphylococcus aureus (strain Newman).